The sequence spans 317 residues: Beta-ketoacyl-[acyl-carrier-protein] synthase III (317 aa).

Catalysis depends on residues cysteine 112 and histidine 244. The tract at residues 245–249 (QANLR) is ACP-binding. The active site involves asparagine 274.

The protein belongs to the thiolase-like superfamily. FabH family. Homodimer.

The protein resides in the cytoplasm. The catalysed reaction is malonyl-[ACP] + acetyl-CoA + H(+) = 3-oxobutanoyl-[ACP] + CO2 + CoA. The protein operates within lipid metabolism; fatty acid biosynthesis. In terms of biological role, catalyzes the condensation reaction of fatty acid synthesis by the addition to an acyl acceptor of two carbons from malonyl-ACP. Catalyzes the first condensation reaction which initiates fatty acid synthesis and may therefore play a role in governing the total rate of fatty acid production. Possesses both acetoacetyl-ACP synthase and acetyl transacylase activities. Its substrate specificity determines the biosynthesis of branched-chain and/or straight-chain of fatty acids. In Pectobacterium atrosepticum (strain SCRI 1043 / ATCC BAA-672) (Erwinia carotovora subsp. atroseptica), this protein is Beta-ketoacyl-[acyl-carrier-protein] synthase III.